The following is a 409-amino-acid chain: Phosphoserine phosphatase SerB2 (409 aa).

ACT domains are found at residues 8-86 and 102-174; these read LITV…RSDD and GRPI…DYGL. The active-site Nucleophile is the aspartate 185. Mg(2+) is bound by residues aspartate 185 and aspartate 187. Aspartate 187 (proton donor) is an active-site residue. Substrate contacts are provided by residues glutamate 194, arginine 230, 273-274, and lysine 318; that span reads SG. Aspartate 341 serves as a coordination point for Mg(2+). Asparagine 344 lines the substrate pocket.

The protein belongs to the HAD-like hydrolase superfamily. SerB family. In terms of assembly, homodimer. The dimeric population shifts to a tetramer in the presence of L-serine, which inactivates the enzyme. The cofactor is Mg(2+). It depends on Mn(2+) as a cofactor.

It is found in the secreted. Its subcellular location is the host cytoplasm. The protein localises to the host cytosol. The enzyme catalyses O-phospho-L-serine + H2O = L-serine + phosphate. It catalyses the reaction O-phospho-D-serine + H2O = D-serine + phosphate. The catalysed reaction is O-phospho-L-seryl-[protein] + H2O = L-seryl-[protein] + phosphate. It carries out the reaction O-phospho-L-threonyl-[protein] + H2O = L-threonyl-[protein] + phosphate. It functions in the pathway amino-acid biosynthesis; L-serine biosynthesis; L-serine from 3-phospho-D-glycerate: step 3/3. Its activity is regulated as follows. Clofazimine, a drug being evaluated for XDR and MDR tuberculosis, inhibits SerB2 phosphatase activity and reverses the various functional effects described above and interactions with host proteins. Is inhibited by known PSP inhibitors such as chlorpromazine, DL-AP3 and sodium orthovanadate, but not by okadaic acid. By binding to the ACT domains, amino-acids have various effects on enzyme activity: L-serine and L-glycine act as inhibitors, whereas L-lysine, L-tyrosine and L-phenylalanine are activators. High throughput screen has been performed to identify specific PSP inhibitors with activity against intracellular bacteria; the two best hits identified in this screen, clorobiocin and rosaniline, are bactericidal and kill bacteria in infected macrophages in a dose-dependent manner. Catalyzes the dephosphorylation of O-phospho-L-serine into L-serine, a step in the L-serine biosynthetic pathway. Exhibits high specificity for L-phosphoserine compared to substrates like L-phosphothreonine (5% relative activity) and L-phosphotyrosine (1.7% relative activity). In terms of biological role, in the host, induces significant cytoskeleton rearrangements through cofilin dephosphorylation and its subsequent activation, and affects the expression of genes that regulate actin dynamics. It specifically interacts with HSP90, HSP70 and HSP27 that block apoptotic pathways but not with other HSPs. Also interacts with GAPDH. It actively dephosphorylates MAP kinase p38 and NF-kappa B p65 (specifically at Ser-536) that play crucial roles in inflammatory and immune responses. This in turn leads to down-regulation of Interleukin 8, a chemotactic and inflammatory cytokine. Thus might help the pathogen to evade the host's immune response. Exogenous addition of purified SerB2 protein to human THP-1 cells (that can be differentiated into macrophage-like cells) induces microtubule rearrangements; the phosphatase activity is co-related to the elicited rearrangements, while addition of the ACT-domains alone elicits no rearrangements. The sequence is that of Phosphoserine phosphatase SerB2 from Mycobacterium tuberculosis (strain ATCC 25618 / H37Rv).